The chain runs to 98 residues: Putative septation protein SpoVG (98 aa).

This sequence belongs to the SpoVG family.

In terms of biological role, essential for sporulation. Interferes with or is a negative regulator of the pathway leading to asymmetric septation. The protein is Putative septation protein SpoVG of Shouchella clausii (strain KSM-K16) (Alkalihalobacillus clausii).